The chain runs to 259 residues: Probable metal transport system ATP-binding protein CT_068 (259 aa).

The ABC transporter domain maps to 9–241 (WSVEDLCVNY…AIFQAYGCEL (233 aa)). Residue 41-48 (GPNGAGKS) coordinates ATP.

The protein belongs to the ABC transporter superfamily.

The protein localises to the cell inner membrane. Its function is as follows. Part of an ATP-driven transport system CT_067/CT_068/CT_069/CT_070 for a metal. Probably responsible for energy coupling to the transport system. This Chlamydia trachomatis serovar D (strain ATCC VR-885 / DSM 19411 / UW-3/Cx) protein is Probable metal transport system ATP-binding protein CT_068.